The sequence spans 127 residues: Fumarate reductase subunit C (127 aa).

The next 3 membrane-spanning stretches (helical) occupy residues 30–50 (ATIL…GCLV), 67–87 (IVVV…QTFF), and 107–127 (IIVL…LVLV).

This sequence belongs to the FrdC family. In terms of assembly, part of an enzyme complex containing four subunits: a flavoprotein (FrdA), an iron-sulfur protein (FrdB), and two hydrophobic anchor proteins (FrdC and FrdD).

The protein localises to the cell inner membrane. Anchors the catalytic components of the fumarate reductase complex to the cell membrane, binds quinones. This is Fumarate reductase subunit C from Photobacterium profundum (strain SS9).